An 85-amino-acid chain; its full sequence is Coiled-coil-helix-coiled-coil-helix domain-containing protein 7 (85 aa).

Residues 13-55 form the CHCH domain; it reads INPCLSESDASTRCMDENNYDRERCSSYFLKYKNCRRFWNSVM. Short sequence motifs (cx9C motif) lie at residues 16 to 26 and 37 to 47; these read CLSESDASTRC and CSSYFLKYKNC. 2 disulfide bridges follow: Cys-16/Cys-47 and Cys-26/Cys-37.

It belongs to the CHCHD7 family. In terms of assembly, monomer.

The protein localises to the mitochondrion intermembrane space. This Mus musculus (Mouse) protein is Coiled-coil-helix-coiled-coil-helix domain-containing protein 7 (Chchd7).